We begin with the raw amino-acid sequence, 116 residues long: Nitrogenase-stabilizing/protective protein NifW (116 aa).

It belongs to the NifW family. As to quaternary structure, homotrimer; associates with NifD.

May protect the nitrogenase Fe-Mo protein from oxidative damage. This chain is Nitrogenase-stabilizing/protective protein NifW, found in Rhodopseudomonas palustris (strain TIE-1).